Reading from the N-terminus, the 483-residue chain is Isocitrate dehydrogenase [NADP] (483 aa).

An NADP(+)-binding site is contributed by Thr-74. D-threo-isocitrate contacts are provided by Ser-83, Asn-85, Arg-89, Arg-99, and Arg-121. Asp-232 provides a ligand contact to Mg(2+). Residues 264-270 (HGSAPDI) and Asn-277 each bind NADP(+).

Belongs to the isocitrate and isopropylmalate dehydrogenases family. Homodimer. Mg(2+) serves as cofactor. Requires Mn(2+) as cofactor.

It catalyses the reaction D-threo-isocitrate + NADP(+) = 2-oxoglutarate + CO2 + NADPH. Its function is as follows. Catalyzes the oxidative decarboxylation of isocitrate to 2-oxoglutarate and carbon dioxide with the concomitant reduction of NADP(+). This chain is Isocitrate dehydrogenase [NADP] (icd), found in Rickettsia conorii (strain ATCC VR-613 / Malish 7).